A 676-amino-acid polypeptide reads, in one-letter code: MACSTLSKSPKDKIDPRDLLIPLILFLSLKGARSAAPGSSPHQVYNITWEVTNGDRETVWAISGNHPLWTWWPVLTPDLCMLALSGPPHWGLEYQAPYSSPPGPPCCSGSSGNVAGCARDCNEPLTSLTPRCNTAWNRLKLDQVTHKSSEGFYVCPGSHRPREAKSCGGPDSFYCASWGCETTGRVYWKPSSSWDYITVDNNLTSNQAVQVCKDNKWCNPLAIRFTNAGKQVTSWTTGHYWGLRLYVSGQDPGLTFGIRLSYQNLGPRIPIGPNPVLADQLSFPLPNPLPKPAKSPPASSSTPTLISPSPTPTQPPPAGTGDRLLNLVQGAYQALNLTNPDKTQECWLCLVSGPPYYEGVAVLGTYSNHTSAPANCSVASQHKLTLSEVTGRGLCIGTVPKTHQALCNTTLKAGKGSYYLVAPTGTMWACNTGLTPCLSATVLNRTTDYCVLVELWPRVTYHPPSYVYSQFEKSHRHKREPVSLTLALLLGGLTMGGIAAGVGTGTTALVATQQFQQLHAAVQDDLKEVEKSITNLEKSLTSLSEVVLQNRRGLDLLFLKEGGLCAALKEECCFYADHTGLVRDSMAKLRERLSQRQKLFESSQGWFEGWFNRSPWFTTLISTIMGPLIILLLILLFGPCILNRLVQFVKDRISVVQALVLTQQYHQLKPLEYEPQ.

A signal peptide spans 1-34 (MACSTLSKSPKDKIDPRDLLIPLILFLSLKGARS). Positions 35–270 (AAPGSSPHQV…SYQNLGPRIP (236 aa)) are receptor-binding domain (RBD). Topologically, residues 35–620 (AAPGSSPHQV…FNRSPWFTTL (586 aa)) are extracellular. Asn-46 carries an N-linked (GlcNAc...) asparagine; by host glycan. Disulfide bonds link Cys-80-Cys-132, Cys-106-Cys-121, Cys-107-Cys-117, Cys-155-Cys-175, and Cys-167-Cys-180. His-89 is a Zn(2+) binding site. Asp-120 contacts Zn(2+). Asn-202 carries N-linked (GlcNAc...) asparagine; by host glycosylation. Cysteines 212 and 218 form a disulfide. A disordered region spans residues 287 to 321 (NPLPKPAKSPPASSSTPTLISPSPTPTQPPPAGTG). Low complexity predominate over residues 296–308 (PPASSSTPTLISP). Over residues 309–318 (SPTPTQPPPA) the composition is skewed to pro residues. Asn-336 carries an N-linked (GlcNAc...) asparagine; by host glycan. Disulfide bonds link Cys-346–Cys-349, Cys-346–Cys-573, Cys-376–Cys-430, Cys-395–Cys-407, Cys-437–Cys-450, and Cys-565–Cys-572. Residues 346-349 (CWLC) carry the CXXC motif. Residues Asn-368 and Asn-375 are each glycosylated (N-linked (GlcNAc...) asparagine; by host). N-linked (GlcNAc...) asparagine; by host glycans are attached at residues Asn-408 and Asn-444. The tract at residues 482–502 (VSLTLALLLGGLTMGGIAAGV) is fusion peptide. Residues 513–547 (QQFQQLHAAVQDDLKEVEKSITNLEKSLTSLSEVV) adopt a coiled-coil conformation. Positions 548-564 (LQNRRGLDLLFLKEGGL) are immunosuppression. The CX6CC motif lies at 565–573 (CAALKEECC). A helical membrane pass occupies residues 621 to 641 (ISTIMGPLIILLLILLFGPCI). Cys-640 carries the S-palmitoyl cysteine; by host lipid modification. Topologically, residues 642 to 676 (LNRLVQFVKDRISVVQALVLTQQYHQLKPLEYEPQ) are cytoplasmic. Residues 665–668 (YHQL) carry the YXXL motif; contains endocytosis signal motif.

As to quaternary structure, the mature envelope protein (Env) consists of a trimer of SU-TM heterodimers attached by a labile interchain disulfide bond. Post-translationally, specific enzymatic cleavages in vivo yield mature proteins. Envelope glycoproteins are synthesized as an inactive precursor that is N-glycosylated and processed likely by host cell furin or by a furin-like protease in the Golgi to yield the mature SU and TM proteins. The cleavage site between SU and TM requires the minimal sequence [KR]-X-[KR]-R. The R-peptide is released from the C-terminus of the cytoplasmic tail of the TM protein upon particle formation as a result of proteolytic cleavage by the viral protease. Cleavage of this peptide is required for TM to become fusogenic. In terms of processing, the CXXC motif is highly conserved across a broad range of retroviral envelope proteins. It is thought to participate in the formation of a labile disulfide bond possibly with the CX6CC motif present in the transmembrane protein. Isomerization of the intersubunit disulfide bond to an SU intrachain disulfide bond is thought to occur upon receptor recognition in order to allow membrane fusion. The transmembrane protein is palmitoylated. Post-translationally, the R-peptide is palmitoylated.

The protein resides in the virion membrane. It is found in the host cell membrane. Functionally, the surface protein (SU) attaches the virus to the host cell by binding to its receptor. This interaction triggers the refolding of the transmembrane protein (TM) and is thought to activate its fusogenic potential by unmasking its fusion peptide. Fusion occurs at the host cell plasma membrane. In terms of biological role, the transmembrane protein (TM) acts as a class I viral fusion protein. Under the current model, the protein has at least 3 conformational states: pre-fusion native state, pre-hairpin intermediate state, and post-fusion hairpin state. During viral and target cell membrane fusion, the coiled coil regions (heptad repeats) assume a trimer-of-hairpins structure, positioning the fusion peptide in close proximity to the C-terminal region of the ectodomain. The formation of this structure appears to drive apposition and subsequent fusion of viral and target cell membranes. Membranes fusion leads to delivery of the nucleocapsid into the cytoplasm. In Friend murine leukemia virus (isolate FB29) (FrMLV), this protein is Envelope glycoprotein (env).